The following is a 424-amino-acid chain: Serine--tRNA ligase (424 aa).

231–233 (TAE) contacts L-serine. An ATP-binding site is contributed by 262 to 264 (RAE). E285 contributes to the L-serine binding site. Position 349–352 (349–352 (EISS)) interacts with ATP. An L-serine-binding site is contributed by S385.

The protein belongs to the class-II aminoacyl-tRNA synthetase family. Type-1 seryl-tRNA synthetase subfamily. As to quaternary structure, homodimer. The tRNA molecule binds across the dimer.

It is found in the cytoplasm. It catalyses the reaction tRNA(Ser) + L-serine + ATP = L-seryl-tRNA(Ser) + AMP + diphosphate + H(+). The enzyme catalyses tRNA(Sec) + L-serine + ATP = L-seryl-tRNA(Sec) + AMP + diphosphate + H(+). It functions in the pathway aminoacyl-tRNA biosynthesis; selenocysteinyl-tRNA(Sec) biosynthesis; L-seryl-tRNA(Sec) from L-serine and tRNA(Sec): step 1/1. In terms of biological role, catalyzes the attachment of serine to tRNA(Ser). Is also able to aminoacylate tRNA(Sec) with serine, to form the misacylated tRNA L-seryl-tRNA(Sec), which will be further converted into selenocysteinyl-tRNA(Sec). The sequence is that of Serine--tRNA ligase from Geobacillus kaustophilus (strain HTA426).